We begin with the raw amino-acid sequence, 357 residues long: GTPase Obg (357 aa).

One can recognise an Obg domain in the interval Met-1–Leu-159. Residues Ala-160 to His-334 form the OBG-type G domain. GTP is bound by residues Gly-166–Ser-173, Phe-191–His-195, Asp-213–Gly-216, Asn-284–Asp-287, and Ser-315–Leu-317. 2 residues coordinate Mg(2+): Ser-173 and Thr-193.

This sequence belongs to the TRAFAC class OBG-HflX-like GTPase superfamily. OBG GTPase family. In terms of assembly, monomer. Mg(2+) is required as a cofactor.

It is found in the cytoplasm. In terms of biological role, an essential GTPase which binds GTP, GDP and possibly (p)ppGpp with moderate affinity, with high nucleotide exchange rates and a fairly low GTP hydrolysis rate. Plays a role in control of the cell cycle, stress response, ribosome biogenesis and in those bacteria that undergo differentiation, in morphogenesis control. This chain is GTPase Obg, found in Acidovorax sp. (strain JS42).